Here is a 172-residue protein sequence, read N- to C-terminus: Caltractin (172 aa).

Residues 1 to 23 are disordered; that stretch reads MQKYGSKKIGATSATSSNKQKVQ. A compositionally biased stretch (polar residues) spans 12 to 21; that stretch reads TSATSSNKQK. 4 consecutive EF-hand domains span residues 29–64, 65–99, 101–136, and 137–172; these read EQRQEIKEAFDLFDMDGSGKIDAKELKVAMRALGFE, PKKEEIKKMISGIDNGSGKIDFNDFLQLMTAKMSE, DSHAEIMKAFRLFDEDDSGFITFANLKRVAKDLGEN, and MTDEELREMIEEADRSNQGQISKEDFLRIMKKTNLF. Ca(2+) contacts are provided by aspartate 42, aspartate 44, serine 46, lysine 48, and glutamate 53.

It belongs to the centrin family. Monomer.

It localises to the cytoplasm. The protein localises to the cytoskeleton. Its subcellular location is the microtubule organizing center. The protein resides in the centrosome. Plays a fundamental role in microtubule-organizing center structure and function. This is Caltractin (CTN) from Naegleria gruberi (Amoeba).